A 108-amino-acid chain; its full sequence is Structural protein 1 (108 aa).

The interval 1–20 (MSRVSEYGVPEGVRESDSDT) is disordered. Residues 1-77 (MSRVSEYGVP…LKMQMDRLCN (77 aa)) lie on the Intravirion side of the membrane. Residues 78 to 98 (VLGVVLQMATLALVTYIAFVV) form a helical; Signal-anchor for type II membrane protein membrane-spanning segment. Over 99-108 (HTRATSCKRE) the chain is Virion surface.

It belongs to the varicellovirus ORF1 protein family. In terms of assembly, homodimer. Post-translationally, phosphorylated.

It is found in the virion membrane. Its subcellular location is the host Golgi apparatus membrane. The polypeptide is Structural protein 1 (Varicella-zoster virus (strain Dumas) (HHV-3)).